The following is a 425-amino-acid chain: Serine--tRNA ligase (425 aa).

An L-serine-binding site is contributed by 233–235 (TAE). 264 to 266 (RRE) serves as a coordination point for ATP. L-serine is bound at residue E287. 351–354 (EISS) provides a ligand contact to ATP. S387 is a binding site for L-serine.

Belongs to the class-II aminoacyl-tRNA synthetase family. Type-1 seryl-tRNA synthetase subfamily. In terms of assembly, homodimer. The tRNA molecule binds across the dimer.

The protein resides in the cytoplasm. It catalyses the reaction tRNA(Ser) + L-serine + ATP = L-seryl-tRNA(Ser) + AMP + diphosphate + H(+). It carries out the reaction tRNA(Sec) + L-serine + ATP = L-seryl-tRNA(Sec) + AMP + diphosphate + H(+). The protein operates within aminoacyl-tRNA biosynthesis; selenocysteinyl-tRNA(Sec) biosynthesis; L-seryl-tRNA(Sec) from L-serine and tRNA(Sec): step 1/1. Functionally, catalyzes the attachment of serine to tRNA(Ser). Is also able to aminoacylate tRNA(Sec) with serine, to form the misacylated tRNA L-seryl-tRNA(Sec), which will be further converted into selenocysteinyl-tRNA(Sec). This is Serine--tRNA ligase from Thermotoga neapolitana (strain ATCC 49049 / DSM 4359 / NBRC 107923 / NS-E).